Reading from the N-terminus, the 502-residue chain is Protein DETOXIFICATION 7 (502 aa).

The next 12 membrane-spanning stretches (helical) occupy residues 36–56 (MAAP…ISMV), 68–88 (AVAI…VGFA), 112–132 (YSSM…WFFM), 143–163 (PLIS…LFGF), 182–202 (LFVS…LLVY), 208–228 (IVGA…LLWI), 262–282 (AMMI…SGLL), 291–311 (VISI…AIGA), 331–351 (AAVN…TITL), 375–395 (ITPI…LSGV), 408–428 (ASLG…CFVM), and 436–456 (WIGI…VTFF).

The protein belongs to the multi antimicrobial extrusion (MATE) (TC 2.A.66.1) family.

The protein resides in the membrane. The sequence is that of Protein DETOXIFICATION 7 from Arabidopsis thaliana (Mouse-ear cress).